Reading from the N-terminus, the 62-residue chain is Large ribosomal subunit protein bL28 (62 aa).

The protein belongs to the bacterial ribosomal protein bL28 family.

This is Large ribosomal subunit protein bL28 from Helicobacter pylori (strain Shi470).